A 126-amino-acid chain; its full sequence is Thioredoxin domain-containing protein, mitochondrial (126 aa).

Positions 14-120 constitute a Thioredoxin domain; it reads SQKIATNTSF…ILEFLNHIET (107 aa).

It belongs to the thioredoxin family.

It localises to the mitochondrion. The protein is Thioredoxin domain-containing protein, mitochondrial of Dictyostelium discoideum (Social amoeba).